An 843-amino-acid polypeptide reads, in one-letter code: Protein P (843 aa).

Residues methionine 1–glutamine 177 form a terminal protein domain (TP) region. The interval glutamate 178–leucine 346 is spacer. Disordered stretches follow at residues glutamine 180 to serine 202 and glutamine 226 to glutamate 315. Basic residues predominate over residues arginine 239 to threonine 249. Polar residues-rich tracts occupy residues threonine 262–histidine 277 and proline 287–glycine 299. Residues glutamate 347–glutamine 690 are polymerase/reverse transcriptase domain (RT). Positions glutamate 357–isoleucine 600 constitute a Reverse transcriptase domain. The Mg(2+) site is built by aspartate 429, aspartate 551, and aspartate 552.

It belongs to the hepadnaviridae P protein family.

The catalysed reaction is DNA(n) + a 2'-deoxyribonucleoside 5'-triphosphate = DNA(n+1) + diphosphate. The enzyme catalyses Endonucleolytic cleavage to 5'-phosphomonoester.. Activated by host HSP70 and HSP40 in vitro to be able to bind the epsilon loop of the pgRNA. Because deletion of the RNase H region renders the protein partly chaperone-independent, the chaperones may be needed indirectly to relieve occlusion of the RNA-binding site by this domain. Inhibited by several reverse-transcriptase inhibitors: Lamivudine, Adefovir and Entecavir. In terms of biological role, multifunctional enzyme that converts the viral RNA genome into dsDNA in viral cytoplasmic capsids. This enzyme displays a DNA polymerase activity that can copy either DNA or RNA templates, and a ribonuclease H (RNase H) activity that cleaves the RNA strand of RNA-DNA heteroduplexes in a partially processive 3'- to 5'-endonucleasic mode. Neo-synthesized pregenomic RNA (pgRNA) are encapsidated together with the P protein, and reverse-transcribed inside the nucleocapsid. Initiation of reverse-transcription occurs first by binding the epsilon loop on the pgRNA genome, and is initiated by protein priming, thereby the 5'-end of (-)DNA is covalently linked to P protein. Partial (+)DNA is synthesized from the (-)DNA template and generates the relaxed circular DNA (RC-DNA) genome. After budding and infection, the RC-DNA migrates in the nucleus, and is converted into a plasmid-like covalently closed circular DNA (cccDNA). The activity of P protein does not seem to be necessary for cccDNA generation, and is presumably released from (+)DNA by host nuclear DNA repair machinery. The chain is Protein P from Hepatitis B virus genotype H (isolate United States/LAS2523/2002) (HBV-H).